Reading from the N-terminus, the 425-residue chain is MAEPGSQGHTVGPLLLLLLLLLPRALPEGPLLFVALVFRHGDRAPLASYPTDPHKEAASTLWPRGLGQLTKEGIRQQLELGRFLRRRYKAFLSPEYKREEVYIRSTDFDRTLESAQANLAGLFPEAAPGSPETDWKPIPVHTVPVSEDKLLRFPMRSCPRYHELLRESTEAADYQEALEGWTDFLTRLGNFTGLSLVGEPLRRAWKVLDTLICQRAHGLDLPSWASPDVLRTLSQISALDIRAHVGPPRAAEKAQLTGGILLDAILSNFSRTQRLGLPLKMVMYSAHDSTLLALQGALGLYDGNTPPYAACMAFEFRGSSREPEEEDGENVTVSLIYRNDTSRPPLPLRVPGCPAPCPLGRFQQLTAPARPPAHGAPCHGSYEPASPPATVPLLAGAVAVLAVLSLGLGLLAWRPRCLRALGGTV.

Positions 1–27 are cleaved as a signal peptide; sequence MAEPGSQGHTVGPLLLLLLLLLPRALP. Over 28–392 the chain is Extracellular; sequence EGPLLFVALV…EPASPPATVP (365 aa). The Nucleophile role is filled by His-40. 3 cysteine pairs are disulfide-bonded: Cys-158–Cys-378, Cys-213–Cys-311, and Cys-353–Cys-357. The active-site Proton donor is the Asp-288. The chain crosses the membrane as a helical span at residues 393 to 413; it reads LLAGAVAVLAVLSLGLGLLAW. The Cytoplasmic portion of the chain corresponds to 414-425; the sequence is RPRCLRALGGTV.

The protein belongs to the histidine acid phosphatase family. In terms of assembly, homodimer. Glycosylated.

It is found in the membrane. The catalysed reaction is a phosphate monoester + H2O = an alcohol + phosphate. May dephosphorylate receptor tyrosine-protein kinase ERBB4 and inhibits its ligand-induced proteolytic cleavage. May play a role in odontogenesis. In Mus musculus (Mouse), this protein is Testicular acid phosphatase.